Reading from the N-terminus, the 470-residue chain is V-type proton ATPase subunit S1 (470 aa).

Positions 1-41 (MMAAMATARVRMGPRCAQALWRMPWLPVFLSLAAAAAAAAA) are cleaved as a signal peptide. Positions 42-231 (EQQVPLVLWS…TAVRPSRVAR (190 aa)) are excised as a propeptide. Over 42-419 (EQQVPLVLWS…EQFSYASDCA (378 aa)) the chain is Lumenal. N-linked (GlcNAc...) asparagine glycosylation is found at asparagine 170, asparagine 261, asparagine 273, asparagine 296, asparagine 303, asparagine 350, and asparagine 357. Cysteines 371 and 418 form a disulfide. A helical membrane pass occupies residues 420 to 440 (SFFSPGIWMGLLTSLFMLFIF). Topologically, residues 441–470 (TYGLHMILSLKTMDRFDDHKGPTISLTQIV) are cytoplasmic. Phosphoserine is present on serine 465.

This sequence belongs to the vacuolar ATPase subunit S1 family. Accessory component of the multisubunit proton-transporting vacuolar (V)-ATPase protein pump. Interacts (via N-terminus) with ATP6AP2 (via N-terminus). Interacts with RNASEK. Interacts with TMEM106B (via C-terminus). N-glycosylated. Widely expressed, with highest levels in brain and lowest in liver and duodenum.

Its subcellular location is the endoplasmic reticulum membrane. It is found in the endoplasmic reticulum-Golgi intermediate compartment membrane. The protein resides in the cytoplasmic vesicle. The protein localises to the secretory vesicle. It localises to the synaptic vesicle membrane. Its subcellular location is the clathrin-coated vesicle membrane. Its function is as follows. Accessory subunit of the proton-transporting vacuolar (V)-ATPase protein pump, which is required for luminal acidification of secretory vesicles. Guides the V-type ATPase into specialized subcellular compartments, such as neuroendocrine regulated secretory vesicles or the ruffled border of the osteoclast, thereby regulating its activity. Involved in membrane trafficking and Ca(2+)-dependent membrane fusion. May play a role in the assembly of the V-type ATPase complex. In aerobic conditions, involved in intracellular iron homeostasis, thus triggering the activity of Fe(2+) prolyl hydroxylase (PHD) enzymes, and leading to HIF1A hydroxylation and subsequent proteasomal degradation. In islets of Langerhans cells, may regulate the acidification of dense-core secretory granules. In Homo sapiens (Human), this protein is V-type proton ATPase subunit S1 (ATP6AP1).